The following is a 416-amino-acid chain: MLKRDMNIADYDAELFAAIQEETLRQEEHIELIASENYTSPRVMEAQGSQLTNKYAEGYPGKRYYGGCEYVDKAEQLAIDRACKLFGCEYANVQPHSGSQANSAVYMALLNPGDTVLGMSLAHGGHLTHGSPVNFSGKHYNVIPYGIDEAGQINYDEMEQLALEHKPKMIIGGFSAYSQIVDWKRMREIADKVDAYLFVDMAHVAGLIAAGEYPTPVPHAHVVTTTTHKTLAGPRGGLILSNAGEDMYKKLNSAVFPGGQGGPLMHVIAGKAVAFKEAMEPEFKAYQARVVKNAKAMVGQFQERGYKIVSNGTENHLFLVDLIDKDITGKDADAALGAANITVNKNSVPNDPRSPFVTSGIRVGTPAITRRGFTEEDAKDLANWMCDVLDNIGNEEVIEATKQKVLEICKRLPVYA.

(6S)-5,6,7,8-tetrahydrofolate-binding positions include leucine 121 and 125 to 127 (GHL). At lysine 229 the chain carries N6-(pyridoxal phosphate)lysine. Residues glutamate 245 and 354–356 (SPF) each bind (6S)-5,6,7,8-tetrahydrofolate.

It belongs to the SHMT family. In terms of assembly, homodimer. Requires pyridoxal 5'-phosphate as cofactor.

The protein resides in the cytoplasm. The catalysed reaction is (6R)-5,10-methylene-5,6,7,8-tetrahydrofolate + glycine + H2O = (6S)-5,6,7,8-tetrahydrofolate + L-serine. It functions in the pathway one-carbon metabolism; tetrahydrofolate interconversion. The protein operates within amino-acid biosynthesis; glycine biosynthesis; glycine from L-serine: step 1/1. Functionally, catalyzes the reversible interconversion of serine and glycine with tetrahydrofolate (THF) serving as the one-carbon carrier. This reaction serves as the major source of one-carbon groups required for the biosynthesis of purines, thymidylate, methionine, and other important biomolecules. Also exhibits THF-independent aldolase activity toward beta-hydroxyamino acids, producing glycine and aldehydes, via a retro-aldol mechanism. The polypeptide is Serine hydroxymethyltransferase 1 (Vibrio parahaemolyticus serotype O3:K6 (strain RIMD 2210633)).